The chain runs to 780 residues: LPS-assembly protein LptD (780 aa).

A signal peptide spans 1-24; that stretch reads MKKRLPTLLASLIGSALYSQQALA.

It belongs to the LptD family. Component of the lipopolysaccharide transport and assembly complex. Interacts with LptE and LptA.

It is found in the cell outer membrane. Together with LptE, is involved in the assembly of lipopolysaccharide (LPS) at the surface of the outer membrane. In Sodalis glossinidius (strain morsitans), this protein is LPS-assembly protein LptD.